Consider the following 564-residue polypeptide: 60 kDa lysophospholipase (564 aa).

An Asparaginase/glutaminase domain is found at 9–355 (RRLLAIYTGG…NDRKKLLAKD (347 aa)). Catalysis depends on threonine 19, which acts as the Acyl-ester intermediate. The tract at residues 41-350 (TLHMFHDEEY…PGLSLNDRKK (310 aa)) is asparaginase. Substrate-binding positions include 84–86 (DSS) and 116–117 (TD). 5 ANK repeats span residues 141-170 (GAQV…YVIP), 396-426 (VLLP…DLNL), 430-459 (SGQT…DVDA), 463-492 (DGQS…RLSP), and 530-559 (DGHC…SVCA). Residue serine 478 is modified to Phosphoserine.

The protein in the N-terminal section; belongs to the asparaginase 1 family. In terms of assembly, monomer.

It carries out the reaction a 1-acyl-sn-glycero-3-phosphocholine + H2O = sn-glycerol 3-phosphocholine + a fatty acid + H(+). The enzyme catalyses L-asparagine + H2O = L-aspartate + NH4(+). The catalysed reaction is a 1-O-alkyl-2-acetyl-sn-glycero-3-phosphocholine + H2O = a 1-O-alkyl-sn-glycero-3-phosphocholine + acetate + H(+). It catalyses the reaction 1-hexadecanoyl-sn-glycero-3-phosphocholine + H2O = sn-glycerol 3-phosphocholine + hexadecanoate + H(+). It carries out the reaction 2 1-hexadecanoyl-sn-glycero-3-phosphocholine = 1,2-dihexadecanoyl-sn-glycero-3-phosphocholine + sn-glycerol 3-phosphocholine. The enzyme catalyses 1-octadecanoyl-sn-glycero-3-phosphocholine + H2O = octadecanoate + sn-glycerol 3-phosphocholine + H(+). The catalysed reaction is 1-(9Z-octadecenoyl)-sn-glycero-3-phosphocholine + H2O = sn-glycerol 3-phosphocholine + (9Z)-octadecenoate + H(+). It catalyses the reaction 1-hexadecanoyl-sn-glycero-3-phosphoethanolamine + H2O = sn-glycero-3-phosphoethanolamine + hexadecanoate + H(+). It carries out the reaction 1-(9Z-octadecenoyl)-sn-glycero-3-phosphoethanolamine + H2O = sn-glycero-3-phosphoethanolamine + (9Z)-octadecenoate + H(+). The enzyme catalyses 1-hexadecanoyl-sn-glycero-3-phosphoethanolamine + 1-hexadecanoyl-sn-glycero-3-phosphocholine = 1,2-dihexadecanoyl-sn-glycero-3-phosphoethanolamine + sn-glycerol 3-phosphocholine. The catalysed reaction is 2-(5Z,8Z,11Z,14Z)-eicosatetraenoyl-sn-glycero-3-phosphocholine + H2O = sn-glycerol 3-phosphocholine + (5Z,8Z,11Z,14Z)-eicosatetraenoate + H(+). It catalyses the reaction 2-hexadecanoyl-sn-glycero-3-phosphocholine + H2O = sn-glycerol 3-phosphocholine + hexadecanoate + H(+). It carries out the reaction 2 2-hexadecanoyl-sn-glycero-3-phosphocholine = 1,2-dihexadecanoyl-sn-glycero-3-phosphocholine + sn-glycerol 3-phosphocholine. The enzyme catalyses 1-O-(9Z)-octadecenoyl-2-O-acetyl-sn-glycero-3-phosphocholine + H2O = 2-acetyl-sn-glycero-3-phosphocholine + (9Z)-octadecenoate + H(+). The catalysed reaction is a 1-acyl-sn-glycero-3-phospho-(1D-myo-inositol) + 1-hexadecanoyl-sn-glycero-3-phosphocholine = a 1-acyl-2-hexadecanoyl-sn-glycero-3-phospho-(1D-myo-inositol) + sn-glycerol 3-phosphocholine. It catalyses the reaction 2 2-(5Z,8Z,11Z,14Z)-eicosatetraenoyl-sn-glycero-3-phosphocholine = 1,2-di-(5Z,8Z,11Z,14Z-eicosatetraenoyl)-sn-glycero-3-phosphocholine + sn-glycerol 3-phosphocholine. In terms of biological role, exhibits lysophospholipase, transacylase, PAF acetylhydrolase and asparaginase activities. Can catalyze three types of transacylation reactions: (1) acyl transfer from 1-acyl-sn-glycero-3-phosphocholine (1-acyl-GPC) to the sn-1(3) positions of glycerol and 2-acylglycerol (sn-1 to -1(3) transfer), (2) acyl transfer from 1-acyl-GPC to the sn-2 positions of 1-acyl-GPC, 1-acyl-sn-glycero-3-phosphoethanolamine (1-acyl-GPE), and other lysophospholipids (sn-1 to -2 transfer) and (3) acyl transfer from 2-acyl-GPC to the sn-1 position of 2-acyl-GPC and 2-acyl-GPE (sn-2 to -1 transfer). Mediates the synthesis of 1-arachidonoyl species of phospholipids by transferring the arachidonoyl residue from 2-arachidonoyl lysophospholipid to the sn-1 position of 2-acyl lysophospholipid. In Mus musculus (Mouse), this protein is 60 kDa lysophospholipase (Aspg).